Consider the following 74-residue polypeptide: Coleoptericin (74 aa).

Residues 1-74 are disordered; the sequence is SLQGGAPNFP…TWHVGGTYRR (74 aa).

Belongs to the coleoptericin family.

It localises to the secreted. Functionally, responsible for the anti Gram-negative activity of immune hemolymph of Z.atratus. This chain is Coleoptericin, found in Zophobas atratus (Giant mealworm beetle).